We begin with the raw amino-acid sequence, 195 residues long: Imidazoleglycerol-phosphate dehydratase (195 aa).

Belongs to the imidazoleglycerol-phosphate dehydratase family.

Its subcellular location is the cytoplasm. The catalysed reaction is D-erythro-1-(imidazol-4-yl)glycerol 3-phosphate = 3-(imidazol-4-yl)-2-oxopropyl phosphate + H2O. The protein operates within amino-acid biosynthesis; L-histidine biosynthesis; L-histidine from 5-phospho-alpha-D-ribose 1-diphosphate: step 6/9. This chain is Imidazoleglycerol-phosphate dehydratase, found in Beijerinckia indica subsp. indica (strain ATCC 9039 / DSM 1715 / NCIMB 8712).